The chain runs to 399 residues: Dual specificity mitogen-activated protein kinase kinase 4 (399 aa).

The interval 1 to 40 (MAAPSPSGGGGSGGGSGSGTPGPVGSPAPGHPAVSSMQGK) is disordered. An N-acetylalanine modification is found at Ala2. The span at 7 to 22 (SGGGGSGGGSGSGTPG) shows a compositional bias: gly residues. The segment at 37 to 52 (MQGKRKALKLNFANPP) is d domain. Arg58 is subject to Asymmetric dimethylarginine; alternate. Position 58 is an omega-N-methylarginine; alternate (Arg58). Phosphoserine is present on Ser90. The Protein kinase domain occupies 102–367 (LKDLGEIGRG…YKELLKHPFI (266 aa)). ATP is bound by residues 108–116 (IGRGAYGSV) and Lys131. Asp229 acts as the Proton acceptor in catalysis. At Ser257 the chain carries Phosphoserine; by MAP3K. Thr261 is modified (phosphothreonine; by MAP3K). The segment at 364 to 387 (HPFILMYEERAVEVACYVCKILDQ) is DVD domain.

Belongs to the protein kinase superfamily. STE Ser/Thr protein kinase family. MAP kinase kinase subfamily. As to quaternary structure, interacts with SPAG9. Interacts (via its D domain) with its substrates MAPK8/JNK1, MAPK9/JNK2, MAPK10/JNK3, MAPK11 and MAPK14. Interacts (via its DVD domain) with MAP3Ks activators like MAP3K1/MEKK1 and MAP3K11/MLK3. Interacts with ARRB1, ARRB2 and MAPK8IP3/JIP3. In terms of processing, activated by phosphorylation on Ser-257 and Thr-261 by MAP kinase kinase kinases (MAP3Ks). In terms of tissue distribution, abundant expression is seen in the skeletal muscle. It is also widely expressed in other tissues.

Its subcellular location is the cytoplasm. It is found in the nucleus. It catalyses the reaction L-seryl-[protein] + ATP = O-phospho-L-seryl-[protein] + ADP + H(+). The enzyme catalyses L-threonyl-[protein] + ATP = O-phospho-L-threonyl-[protein] + ADP + H(+). It carries out the reaction L-tyrosyl-[protein] + ATP = O-phospho-L-tyrosyl-[protein] + ADP + H(+). With respect to regulation, activated in response to a variety of cellular stresses, including UV and gamma-irradiation, heat shock, hyperosmolarity, T-cell receptor stimulation, peroxide and inflammatory cytokines. Also activated by developmental cues. MAP2K4/MKK4 is activated by the majority of MKKKs, such as MAP3K5/ASK1, MAP3K1/MEKK1, MAP3K7/TAK1, MAP3K10/MLK2, MAP3K11/MLK3, MAP3K12/DLK and MAP3K13/LZK. Dual specificity protein kinase which acts as an essential component of the MAP kinase signal transduction pathway. Essential component of the stress-activated protein kinase/c-Jun N-terminal kinase (SAP/JNK) signaling pathway. With MAP2K7/MKK7, is the one of the only known kinase to directly activate the stress-activated protein kinase/c-Jun N-terminal kinases MAPK8/JNK1, MAPK9/JNK2 and MAPK10/JNK3. MAP2K4/MKK4 and MAP2K7/MKK7 both activate the JNKs by phosphorylation, but they differ in their preference for the phosphorylation site in the Thr-Pro-Tyr motif. MAP2K4 shows preference for phosphorylation of the Tyr residue and MAP2K7/MKK7 for the Thr residue. The phosphorylation of the Thr residue by MAP2K7/MKK7 seems to be the prerequisite for JNK activation at least in response to pro-inflammatory cytokines, while other stimuli activate both MAP2K4/MKK4 and MAP2K7/MKK7 which synergistically phosphorylate JNKs. MAP2K4 is required for maintaining peripheral lymphoid homeostasis. The MKK/JNK signaling pathway is also involved in mitochondrial death signaling pathway, including the release cytochrome c, leading to apoptosis. Whereas MAP2K7/MKK7 exclusively activates JNKs, MAP2K4/MKK4 additionally activates the p38 MAPKs MAPK11, MAPK12, MAPK13 and MAPK14. In Homo sapiens (Human), this protein is Dual specificity mitogen-activated protein kinase kinase 4 (MAP2K4).